A 307-amino-acid polypeptide reads, in one-letter code: Elongation factor Ts (307 aa).

The tract at residues Thr80–Val83 is involved in Mg(2+) ion dislocation from EF-Tu.

The protein belongs to the EF-Ts family.

Its subcellular location is the cytoplasm. Functionally, associates with the EF-Tu.GDP complex and induces the exchange of GDP to GTP. It remains bound to the aminoacyl-tRNA.EF-Tu.GTP complex up to the GTP hydrolysis stage on the ribosome. This is Elongation factor Ts from Variovorax paradoxus (strain S110).